A 3124-amino-acid chain; its full sequence is Collagen alpha-1(XII) chain (3124 aa).

A signal peptide spans 1-23; the sequence is MRTALCSAVAALCAAALLSSIEA. The region spanning 27-117 is the Fibronectin type-III 1 domain; the sequence is PPSDLNFTII…GQLTIQTGGP (91 aa). N-linked (GlcNAc...) asparagine glycosylation occurs at Asn32. A VWFA 1 domain is found at 139–311; sequence DLVFLVDGSW…DGIVDIQNEI (173 aa). Residue Ser328 is glycosylated (O-linked (Xyl...) (chondroitin sulfate) serine). Residues 335 to 424 enclose the Fibronectin type-III 2 domain; the sequence is PASNLVATQI…ITIMEKTQQV (90 aa). Positions 439 to 615 constitute a VWFA 2 domain; it reads DVVFLVDGSY…RISFELTQSV (177 aa). Fibronectin type-III domains follow at residues 633–722, 724–815, 816–906, 908–998, 999–1087, and 1089–1179; these read PAKN…LEVK, APRN…VRGN, PRNL…LEER, SPRN…VSQS, ARTV…ASPF, and PPRN…TLSD. Residues Ser797, Ser890, and Ser981 are each glycosylated (O-linked (Xyl...) (chondroitin sulfate) serine). Asn1006, Asn1032, and Asn1044 each carry an N-linked (GlcNAc...) asparagine glycan. Residues 1075 to 1100 form a disordered region; sequence KSRKAEGTTASPFKPPRNLRTSDSTM. One can recognise a VWFA 3 domain in the interval 1199–1371; the sequence is DIVLLVDGSW…SFLASIGEDV (173 aa). Fibronectin type-III domains lie at 1387–1476, 1477–1568, 1569–1659, 1660–1756, 1759–1853, 1854–1939, 1940–2030, 2031–2121, 2122–2210, and 2211–2299; these read PPSN…YPLS, SVRN…LPLP, GPRG…VPSP, VNLR…TPAP, GPRN…TVKN, MLVY…LERG, TPRN…LPRS, GPRN…VGLL, PPQN…LYLN, and VTDL…LKPT. Asn1512 carries an N-linked (GlcNAc...) asparagine glycan. Asn1767 carries an N-linked (GlcNAc...) asparagine glycan. N-linked (GlcNAc...) asparagine glycosylation is found at Asn2210 and Asn2273. The region spanning 2327–2500 is the VWFA 4 domain; sequence DIVFLTDASW…DAFEKIQDNL (174 aa). The interval 2455-2750 is nonhelical region (NC3); sequence SGFSVFVVGV…NACTCTQDSV (296 aa). A Laminin G-like domain is found at 2524-2716; sequence GFKMLESYNL…IQNFDIVCSP (193 aa). Residues Asn2532 and Asn2683 are each glycosylated (N-linked (GlcNAc...) asparagine). Disordered stretches follow at residues 2749-2900 and 2935-3080; these read SVGP…GDRG and PNDY…EGEP. Collagen-like domains are found at residues 2751–2802, 2807–2858, and 2859–2900; these read GPPG…GPNG, GEPG…GPRG, and PPGP…GDRG. The tract at residues 2751-2902 is triple-helical region (COL2) with 1 imperfection; the sequence is GPPGPPGPPG…KGEKGDRGDI (152 aa). Composition is skewed to pro residues over residues 2752 to 2761 and 2788 to 2798; these read PPGPPGPPGG and PPGPQGPPGPQ. A compositionally biased stretch (low complexity) spans 2821–2830; sequence PGLPGRSGTP. Residues 2832 to 2841 show a composition bias toward pro residues; that stretch reads LPGPPGPVGP. 2 stretches are compositionally biased toward low complexity: residues 2842–2854 and 2865–2878; these read PGER…DGPT and APGV…SGKP. The Cell attachment site motif lies at 2899–2901; it reads RGD. The segment at 2903 to 2945 is nonhelical region (NC2); it reads ASQNMMRAVARQVCEQLINGQMSRFNQMLNQIPNDYYSNRNQP. Positions 2935–2944 are enriched in polar residues; it reads PNDYYSNRNQ. Pro residues predominate over residues 2945–2954; sequence PGPPGPPGPP. A Collagen-like 4 domain is found at 2945 to 2994; sequence PGPPGPPGPPGAAGTRGEPGPGGRPGFPGPPGVQGPPGERGMPGEKGERG. The triple-helical region (COL1) with 2 imperfections stretch occupies residues 2946–3048; that stretch reads GPPGPPGPPG…RGPPGPPGYC (103 aa). The segment covering 2961–2970 has biased composition (gly residues); that stretch reads GEPGPGGRPG. Positions 3010–3024 are enriched in low complexity; that stretch reads QGESRTGPPGSTGSR. Residues 3049–3124 are nonhelical region (NC1); that stretch reads DSSQCASIPY…SLSRKAKRKP (76 aa).

This sequence belongs to the fibril-associated collagens with interrupted helices (FACIT) family. Trimer of identical chains each containing 190 kDa of non-triple-helical sequences. Post-translationally, the triple-helical tail is stabilized by disulfide bonds at each end. Prolines at the third position of the tripeptide repeating unit (G-X-Y) are hydroxylated in some or all of the chains. In terms of processing, O-glycosylated; glycosaminoglycan of chondroitin-sulfate type. Type XII collagen is present in tendons, ligaments, perichondrium, and periosteum, all dense connective tissues containing type I collagen.

The protein localises to the secreted. It is found in the extracellular space. The protein resides in the extracellular matrix. In terms of biological role, type XII collagen interacts with type I collagen-containing fibrils, the COL1 domain could be associated with the surface of the fibrils, and the COL2 and NC3 domains may be localized in the perifibrillar matrix. The protein is Collagen alpha-1(XII) chain (COL12A1) of Gallus gallus (Chicken).